Here is a 355-residue protein sequence, read N- to C-terminus: Myosin-binding protein H-like (355 aa).

2 stretches are compositionally biased toward polar residues: residues 1 to 16 and 31 to 41; these read META…SQRQ and TSHQQEAGSPS. The tract at residues 1 to 41 is disordered; it reads METATTLEIASCSQRQVEAAADPADAKGPRTSHQQEAGSPS. Serine 39 bears the Phosphoserine mark. An Ig-like C2-type 1 domain is found at 46–140; the sequence is PSIEEHPKIW…GGLQATATIN (95 aa). Residues 149–244 enclose the Fibronectin type-III domain; it reads PPQSIKLVDV…TADLAHIQKA (96 aa). An Ig-like C2-type 2 domain is found at 262 to 346; the sequence is PKFTQPLADC…INALGEASVD (85 aa). Cysteine 283 and cysteine 334 are oxidised to a cystine. An Omega-N-methylarginine modification is found at arginine 322.

This sequence belongs to the immunoglobulin superfamily. MyBP family. In terms of tissue distribution, expressed in the atria as well as in discrete puncta throughout the right ventricular wall and septum.

The protein localises to the cytoplasm. It is found in the myofibril. The protein resides in the sarcomere. In terms of biological role, myosin-binding protein which plays a role in cardiac function. Seems to regulate conduction in the atria and ventricular conduction systems. This chain is Myosin-binding protein H-like, found in Mus musculus (Mouse).